The chain runs to 400 residues: Argininosuccinate synthase (400 aa).

8–16 (AYSGGLDTS) contacts ATP. Positions 86 and 91 each coordinate L-citrulline. Glycine 116 contributes to the ATP binding site. L-aspartate contacts are provided by threonine 118, asparagine 122, and aspartate 123. Residue asparagine 122 coordinates L-citrulline. L-citrulline contacts are provided by arginine 126, serine 175, serine 184, glutamate 260, and tyrosine 272.

It belongs to the argininosuccinate synthase family. Type 1 subfamily. As to quaternary structure, homotetramer.

It localises to the cytoplasm. It catalyses the reaction L-citrulline + L-aspartate + ATP = 2-(N(omega)-L-arginino)succinate + AMP + diphosphate + H(+). Its pathway is amino-acid biosynthesis; L-arginine biosynthesis; L-arginine from L-ornithine and carbamoyl phosphate: step 2/3. The polypeptide is Argininosuccinate synthase (Clostridium acetobutylicum (strain ATCC 824 / DSM 792 / JCM 1419 / IAM 19013 / LMG 5710 / NBRC 13948 / NRRL B-527 / VKM B-1787 / 2291 / W)).